We begin with the raw amino-acid sequence, 406 residues long: Putative F-box protein At5g38270 (406 aa).

The 48-residue stretch at 20–67 (HDWSKLCPDILRSILESLSSTDFHRAKTVCSDWYSNWKTCVKPLCPWR) folds into the F-box domain.

The polypeptide is Putative F-box protein At5g38270 (Arabidopsis thaliana (Mouse-ear cress)).